We begin with the raw amino-acid sequence, 108 residues long: Protein YcgL (108 aa).

One can recognise a YcgL domain in the interval 12–96 (MFCVIYRSSK…PPEDLLKQHL (85 aa)).

This chain is Protein YcgL, found in Shigella sonnei (strain Ss046).